We begin with the raw amino-acid sequence, 705 residues long: Polyribonucleotide nucleotidyltransferase (705 aa).

Mg(2+) contacts are provided by D486 and D492. The KH domain maps to 553-612; it reads PRIYTMKINPEKIKDVIGKGGSVIRALTDETGTTIEIEDDGTIKIAATDGDKAKHAIRRI. Positions 622 to 690 constitute an S1 motif domain; that stretch reads GRIYAGKVTR…RQGRIRLSIK (69 aa).

This sequence belongs to the polyribonucleotide nucleotidyltransferase family. In terms of assembly, component of the RNA degradosome, which is a multiprotein complex involved in RNA processing and mRNA degradation. Mg(2+) is required as a cofactor.

It is found in the cytoplasm. The catalysed reaction is RNA(n+1) + phosphate = RNA(n) + a ribonucleoside 5'-diphosphate. Its function is as follows. Involved in mRNA degradation. Catalyzes the phosphorolysis of single-stranded polyribonucleotides processively in the 3'- to 5'-direction. The sequence is that of Polyribonucleotide nucleotidyltransferase from Yersinia pestis bv. Antiqua (strain Nepal516).